Consider the following 674-residue polypeptide: Primary amine oxidase (674 aa).

The N-terminal stretch at 1–25 (MASTTTMRLALFSVLTLLSFHAVVS) is a signal peptide. An N-linked (GlcNAc...) asparagine glycan is attached at N156. C162 and C183 form a disulfide bridge. A compositionally biased stretch (polar residues) spans 226–236 (ENTEYQVSKQS). The disordered stretch occupies residues 226-251 (ENTEYQVSKQSPPFGPKQHSLTSHQP). 323–334 (FFDSGEFGFGLS) contributes to the substrate binding site. Residue D325 is the Proton acceptor of the active site. A disulfide bridge connects residues C344 and C370. A glycan (N-linked (GlcNAc...) asparagine) is linked at N389. Position 409-414 (409-414 (VGNYDN)) interacts with substrate. Residue Y412 is the Schiff-base intermediate with substrate; via topaquinone of the active site. Position 412 is a 2',4',5'-topaquinone (Y412). Positions 467 and 469 each coordinate Cu cation. Positions 476, 477, 478, 617, and 618 each coordinate Mn(2+). Cu cation is bound at residue H628.

This sequence belongs to the copper/topaquinone oxidase family. Homodimer. The cofactor is Cu cation. It depends on Mn(2+) as a cofactor. Requires L-topaquinone as cofactor. Topaquinone (TPQ) is generated by copper-dependent autoxidation of a specific tyrosyl residue.

It carries out the reaction a primary methyl amine + O2 + H2O = an aldehyde + H2O2 + NH4(+). In Pisum sativum (Garden pea), this protein is Primary amine oxidase.